The chain runs to 143 residues: 3-dehydroquinate dehydratase (143 aa).

Tyr-22 acts as the Proton acceptor in catalysis. The substrate site is built by Asn-73, His-79, and Asp-86. Catalysis depends on His-99, which acts as the Proton donor. Substrate contacts are provided by residues 100–101 and Arg-110; that span reads IS.

Belongs to the type-II 3-dehydroquinase family. Homododecamer.

The enzyme catalyses 3-dehydroquinate = 3-dehydroshikimate + H2O. Its pathway is metabolic intermediate biosynthesis; chorismate biosynthesis; chorismate from D-erythrose 4-phosphate and phosphoenolpyruvate: step 3/7. Its function is as follows. Catalyzes a trans-dehydration via an enolate intermediate. The protein is 3-dehydroquinate dehydratase of Mycobacterium avium (strain 104).